Here is a 236-residue protein sequence, read N- to C-terminus: 2-C-methyl-D-erythritol 4-phosphate cytidylyltransferase (236 aa).

The protein belongs to the IspD/TarI cytidylyltransferase family. IspD subfamily. Homodimer.

It carries out the reaction 2-C-methyl-D-erythritol 4-phosphate + CTP + H(+) = 4-CDP-2-C-methyl-D-erythritol + diphosphate. It functions in the pathway isoprenoid biosynthesis; isopentenyl diphosphate biosynthesis via DXP pathway; isopentenyl diphosphate from 1-deoxy-D-xylulose 5-phosphate: step 2/6. Catalyzes the formation of 4-diphosphocytidyl-2-C-methyl-D-erythritol from CTP and 2-C-methyl-D-erythritol 4-phosphate (MEP). This Salmonella newport (strain SL254) protein is 2-C-methyl-D-erythritol 4-phosphate cytidylyltransferase.